The following is a 214-amino-acid chain: uncharacterized protein (214 aa).

This is an uncharacterized protein from Sinorhizobium fredii (strain NBRC 101917 / NGR234).